A 622-amino-acid chain; its full sequence is E3 ubiquitin-protein ligase hrd-1 (622 aa).

A signal peptide spans 1–23 (MRVSAGLMIGGSCVATAATVLNA). Residues 24-41 (FVINKQFYPSIVYLSKSN) lie on the Lumenal side of the membrane. The chain crosses the membrane as a helical span at residues 42 to 62 (ASMAVLYFQGIVLVYLMFQLL). Residues 63-99 (KSILFGDLRAAEAEHLSERTWHAVLETCLAFTVFRDD) are Cytoplasmic-facing. The chain crosses the membrane as a helical span at residues 100–120 (FSAMFVMQFIGLLFIKCFHWL). Residues 121–141 (ADDRVDMMERSPVITLRFHLR) are Lumenal-facing. Residues 142–162 (MMTVLAALGFADSYFVSSAYF) form a helical membrane-spanning segment. The Cytoplasmic segment spans residues 163–170 (STITKGAS). A helical transmembrane segment spans residues 171-191 (SQIVFGFEYAILLALVLHVTI). The Lumenal segment spans residues 192 to 215 (KYLLHMHDLRNPQSWDNKAVYLLY). A helical transmembrane segment spans residues 216–236 (AELLINLIRCVLYGFFAVIML). Residues 237 to 622 (RVHTFPLFSV…RFPPPNPEHE (386 aa)) lie on the Cytoplasmic side of the membrane. The RING-type; atypical zinc-finger motif lies at 292 to 333 (CIICREEMTVESSPKRLPCSHVFHAHCLRSWFQRQQTCPTCR). Pro residues predominate over residues 436–445 (MPPPPIPQPN). Disordered regions lie at residues 436-463 (MPPP…PNFD) and 514-622 (PVPT…PEHE). The segment covering 526–538 (ATASSVPTSVPSE) has biased composition (low complexity). Residues 562–577 (FNDTQSTSTPSTSAGP) are compositionally biased toward polar residues. The span at 579–596 (PSLTPSTSSVPSTSSVRT) shows a compositional bias: low complexity.

It belongs to the HRD1 family. Homodimer.

Its subcellular location is the endoplasmic reticulum membrane. The enzyme catalyses S-ubiquitinyl-[E2 ubiquitin-conjugating enzyme]-L-cysteine + [acceptor protein]-L-lysine = [E2 ubiquitin-conjugating enzyme]-L-cysteine + N(6)-ubiquitinyl-[acceptor protein]-L-lysine.. It participates in protein modification; protein ubiquitination. In terms of biological role, acts as an E3 ubiquitin-protein ligase which accepts ubiquitin specifically from endoplasmic reticulum-associated ubc-7 E2 ligase and transfers it to substrates, promoting their degradation. Component of the endoplasmic reticulum quality control (ERQC) system, which is also called the ER-associated degradation (ERAD) system, involved in ubiquitin-dependent degradation of misfolded endoplasmic reticulum proteins. Also promotes the degradation of normal but naturally short-lived proteins. Protects cells from ER stress-induced apoptosis. Thought to play a role together with hsp-3 in developmental growth and function of intestinal cells and to play a role together with hsp-4 in gonad formation. The protein is E3 ubiquitin-protein ligase hrd-1 of Caenorhabditis briggsae.